Consider the following 198-residue polypeptide: Recombination protein RecR (198 aa).

Residues 57 to 72 (CSECQTLTDKDPCAVC) form a C4-type zinc finger. The Toprim domain occupies 80-175 (RIICVVEGVP…KVTRIAQGIP (96 aa)).

It belongs to the RecR family.

Its function is as follows. May play a role in DNA repair. It seems to be involved in an RecBC-independent recombinational process of DNA repair. It may act with RecF and RecO. The sequence is that of Recombination protein RecR from Anaeromyxobacter sp. (strain Fw109-5).